The primary structure comprises 390 residues: Galactokinase (390 aa).

Residue glutamate 33–aspartate 36 coordinates substrate. Residues serine 67 and glycine 124–serine 130 each bind ATP. Mg(2+) contacts are provided by serine 130 and glutamate 162. Residue aspartate 174 is the Proton acceptor of the active site. Substrate is bound at residue tyrosine 224.

It belongs to the GHMP kinase family. GalK subfamily.

It is found in the cytoplasm. It catalyses the reaction alpha-D-galactose + ATP = alpha-D-galactose 1-phosphate + ADP + H(+). It functions in the pathway carbohydrate metabolism; galactose metabolism. In terms of biological role, catalyzes the transfer of the gamma-phosphate of ATP to D-galactose to form alpha-D-galactose-1-phosphate (Gal-1-P). The protein is Galactokinase of Streptococcus mutans serotype c (strain ATCC 700610 / UA159).